The primary structure comprises 168 residues: Lipoprotein signal peptidase (168 aa).

Transmembrane regions (helical) follow at residues 15–35, 47–67, 75–95, and 107–127; these read WLWL…IVME, VLPF…SFLS, WLFT…MSKL, and AMII…GFVV. Active-site residues include Asp128 and Asp146. Residues 141-161 form a helical membrane-spanning segment; it reads AFNLADTAICLGAAMIILDGF.

It belongs to the peptidase A8 family.

The protein localises to the cell inner membrane. It carries out the reaction Release of signal peptides from bacterial membrane prolipoproteins. Hydrolyzes -Xaa-Yaa-Zaa-|-(S,diacylglyceryl)Cys-, in which Xaa is hydrophobic (preferably Leu), and Yaa (Ala or Ser) and Zaa (Gly or Ala) have small, neutral side chains.. It participates in protein modification; lipoprotein biosynthesis (signal peptide cleavage). Its function is as follows. This protein specifically catalyzes the removal of signal peptides from prolipoproteins. The polypeptide is Lipoprotein signal peptidase (Vibrio vulnificus (strain CMCP6)).